A 421-amino-acid chain; its full sequence is Dihydroorotase (421 aa).

The Zn(2+) site is built by His59 and His61. Residues 61–63 and Asn93 each bind substrate; that span reads HLR. Residues Asp150, His177, and His230 each contribute to the Zn(2+) site. Asn276 contacts substrate. Asp303 contributes to the Zn(2+) binding site. Asp303 is a catalytic residue. Position 307 (His307) interacts with substrate.

It belongs to the metallo-dependent hydrolases superfamily. DHOase family. Class I DHOase subfamily. Zn(2+) serves as cofactor.

The catalysed reaction is (S)-dihydroorotate + H2O = N-carbamoyl-L-aspartate + H(+). It functions in the pathway pyrimidine metabolism; UMP biosynthesis via de novo pathway; (S)-dihydroorotate from bicarbonate: step 3/3. Functionally, catalyzes the reversible cyclization of carbamoyl aspartate to dihydroorotate. The polypeptide is Dihydroorotase (Desulfotalea psychrophila (strain LSv54 / DSM 12343)).